A 275-amino-acid chain; its full sequence is Large ribosomal subunit protein uL2 (275 aa).

The interval 222-257 is disordered; sequence GTAMNAVDHPHGGGRGRSKGNNQPRSPWNQPAKGFK. Residues 240-250 show a composition bias toward polar residues; the sequence is KGNNQPRSPWN.

The protein belongs to the universal ribosomal protein uL2 family. In terms of assembly, part of the 50S ribosomal subunit. Forms a bridge to the 30S subunit in the 70S ribosome.

One of the primary rRNA binding proteins. Required for association of the 30S and 50S subunits to form the 70S ribosome, for tRNA binding and peptide bond formation. It has been suggested to have peptidyltransferase activity; this is somewhat controversial. Makes several contacts with the 16S rRNA in the 70S ribosome. In Endomicrobium trichonymphae, this protein is Large ribosomal subunit protein uL2.